Consider the following 170-residue polypeptide: MLQPHLVIGSAFTFGDAFFTLFAFAILLVLIRIYAWKPLMGVMKEREEHIGSEIDAAEESRAQAEQLLAEQKSVLQQARVESQTMIENAKQLGEKEREEIVKTARRESERIKEEAKSDIAREKEDAISALREQVGSLSVLIASKVIEKNLDEKEQSNLIQDYIERLGDDK.

Residues 11–31 (AFTFGDAFFTLFAFAILLVLI) form a helical membrane-spanning segment.

The protein belongs to the ATPase B chain family. F-type ATPases have 2 components, F(1) - the catalytic core - and F(0) - the membrane proton channel. F(1) has five subunits: alpha(3), beta(3), gamma(1), delta(1), epsilon(1). F(0) has three main subunits: a(1), b(2) and c(10-14). The alpha and beta chains form an alternating ring which encloses part of the gamma chain. F(1) is attached to F(0) by a central stalk formed by the gamma and epsilon chains, while a peripheral stalk is formed by the delta and b chains.

The protein resides in the cell membrane. F(1)F(0) ATP synthase produces ATP from ADP in the presence of a proton or sodium gradient. F-type ATPases consist of two structural domains, F(1) containing the extramembraneous catalytic core and F(0) containing the membrane proton channel, linked together by a central stalk and a peripheral stalk. During catalysis, ATP synthesis in the catalytic domain of F(1) is coupled via a rotary mechanism of the central stalk subunits to proton translocation. In terms of biological role, component of the F(0) channel, it forms part of the peripheral stalk, linking F(1) to F(0). The protein is ATP synthase subunit b of Listeria monocytogenes serotype 4b (strain F2365).